We begin with the raw amino-acid sequence, 500 residues long: Kynurenine 3-monooxygenase (500 aa).

The protein belongs to the aromatic-ring hydroxylase family. KMO subfamily. FAD serves as cofactor.

The protein resides in the mitochondrion outer membrane. The catalysed reaction is L-kynurenine + NADPH + O2 + H(+) = 3-hydroxy-L-kynurenine + NADP(+) + H2O. The protein operates within cofactor biosynthesis; NAD(+) biosynthesis; quinolinate from L-kynurenine: step 1/3. Functionally, catalyzes the hydroxylation of L-kynurenine (L-Kyn) to form 3-hydroxy-L-kynurenine (L-3OHKyn). Required for synthesis of quinolinic acid. The protein is Kynurenine 3-monooxygenase (bna4) of Aspergillus terreus (strain NIH 2624 / FGSC A1156).